The chain runs to 395 residues: Putative carbonic anhydrase 1 (395 aa).

An N-terminal signal peptide occupies residues 1–24 (MKLQGAGCVVAAVLGALFIVNVES). Residues 42-365 (ISYDVRSTIG…LNDRPVFLVR (324 aa)) form the Alpha-carbonic anhydrase domain. H139, H141, and H165 together coordinate Zn(2+).

Belongs to the alpha-carbonic anhydrase family. The cofactor is Zn(2+). Component of the acid-insoluble and acid-soluble organic matrix of calcified layers of the shell (at protein level).

Its subcellular location is the secreted. It carries out the reaction hydrogencarbonate + H(+) = CO2 + H2O. Its function is as follows. Reversible hydration of carbon dioxide. The chain is Putative carbonic anhydrase 1 from Lottia gigantea (Giant owl limpet).